Reading from the N-terminus, the 254-residue chain is N(G),N(G)-dimethylarginine dimethylaminohydrolase (254 aa).

Substrate is bound by residues Leu-18, Asp-60, 65–66 (ED), Arg-85, and Arg-132. His-162 serves as the catalytic Proton donor. Residue His-162 participates in Zn(2+) binding. Ile-243 is a binding site for substrate. Cys-249 is a Zn(2+) binding site. Residue Cys-249 is the Nucleophile of the active site.

Belongs to the DDAH family. As to quaternary structure, homodimer.

It catalyses the reaction N(omega),N(omega)-dimethyl-L-arginine + H2O = dimethylamine + L-citrulline. The catalysed reaction is N(omega)-methyl-L-arginine + H2O = L-citrulline + methylamine. With respect to regulation, inhibited by zinc ions. Competitively inhibited by lysine. In terms of biological role, hydrolyzes N(G),N(G)-dimethyl-L-arginine (ADMA) and N(G)-monomethyl-L-arginine (MMA). The protein is N(G),N(G)-dimethylarginine dimethylaminohydrolase of Pseudomonas aeruginosa (strain ATCC 15692 / DSM 22644 / CIP 104116 / JCM 14847 / LMG 12228 / 1C / PRS 101 / PAO1).